A 146-amino-acid chain; its full sequence is Hemoglobin subunit beta-1 (146 aa).

The 145-residue stretch at 2–146 folds into the Globin domain; the sequence is EWSSNERSTI…VISALSRQYF (145 aa). The heme b site is built by His-63 and His-92.

Belongs to the globin family. In terms of assembly, heterotetramer of two alpha chains and two beta chains. In terms of tissue distribution, red blood cells.

Its function is as follows. Involved in oxygen transport from gills to the various peripheral tissues. The chain is Hemoglobin subunit beta-1 (hbb1) from Muraena helena (Mediterranean moray).